Here is a 285-residue protein sequence, read N- to C-terminus: Urease accessory protein UreD 1 (285 aa).

This sequence belongs to the UreD family. UreD, UreF and UreG form a complex that acts as a GTP-hydrolysis-dependent molecular chaperone, activating the urease apoprotein by helping to assemble the nickel containing metallocenter of UreC. The UreE protein probably delivers the nickel.

The protein resides in the cytoplasm. Functionally, required for maturation of urease via the functional incorporation of the urease nickel metallocenter. This chain is Urease accessory protein UreD 1, found in Pseudomonas syringae pv. tomato (strain ATCC BAA-871 / DC3000).